A 94-amino-acid chain; its full sequence is Serine protease inhibitor Kazal-type 13 (94 aa).

An N-terminal signal peptide occupies residues 1–23 (MAAFPHKIIFFLVCSTLTHVAFS). The 62-residue stretch at 33-94 (RWPKPRCKMY…IKFEKYGKCD (62 aa)) folds into the Kazal-like domain. 3 disulfide bridges follow: Cys-39–Cys-75, Cys-53–Cys-72, and Cys-61–Cys-93. N-linked (GlcNAc...) asparagine glycosylation occurs at Asn-55.

The protein localises to the secreted. May be a serine protease inhibitor. Essential for sperm maturation and fertility. Inhibits sperm acrosome reaction, protecting sperm from premature reaction. The chain is Serine protease inhibitor Kazal-type 13 (SPINK13) from Homo sapiens (Human).